The primary structure comprises 303 residues: Glyceraldehyde-3-phosphate dehydrogenase (303 aa).

Residues 6–7 (RI), Asp-28, Arg-72, and Thr-114 each bind NAD(+). Residues 143–145 (SCT), Thr-174, 203–204 (TG), and Arg-226 each bind D-glyceraldehyde 3-phosphate. Catalysis depends on Cys-144, which acts as the Nucleophile.

This sequence belongs to the glyceraldehyde-3-phosphate dehydrogenase family. In terms of assembly, homotetramer.

The protein localises to the cytoplasm. The catalysed reaction is D-glyceraldehyde 3-phosphate + phosphate + NAD(+) = (2R)-3-phospho-glyceroyl phosphate + NADH + H(+). Its pathway is carbohydrate degradation; glycolysis; pyruvate from D-glyceraldehyde 3-phosphate: step 1/5. Functionally, catalyzes the oxidative phosphorylation of glyceraldehyde 3-phosphate (G3P) to 1,3-bisphosphoglycerate (BPG) using the cofactor NAD. The first reaction step involves the formation of a hemiacetal intermediate between G3P and a cysteine residue, and this hemiacetal intermediate is then oxidized to a thioester, with concomitant reduction of NAD to NADH. The reduced NADH is then exchanged with the second NAD, and the thioester is attacked by a nucleophilic inorganic phosphate to produce BPG. This chain is Glyceraldehyde-3-phosphate dehydrogenase (gap), found in Klebsiella pneumoniae.